The primary structure comprises 315 residues: Putative heme-binding peroxidase (315 aa).

His40 (proton acceptor) is an active-site residue. His169 provides a ligand contact to heme b. Residue Trp185 is the Tryptophan radical intermediate of the active site. The interval 267–286 (EEGKPLDKTAPPAGDETCPV) is disordered.

It belongs to the peroxidase family. Cytochrome c peroxidase subfamily. Requires heme b as cofactor.

Functionally, destroys radicals which are normally produced within the cells and which are toxic to biological systems. In Cryptococcus neoformans var. neoformans serotype D (strain B-3501A) (Filobasidiella neoformans), this protein is Putative heme-binding peroxidase.